Here is a 100-residue protein sequence, read N- to C-terminus: Nucleoid-associated protein Cagg_3200 (100 aa).

It belongs to the YbaB/EbfC family. In terms of assembly, homodimer.

Its subcellular location is the cytoplasm. It localises to the nucleoid. In terms of biological role, binds to DNA and alters its conformation. May be involved in regulation of gene expression, nucleoid organization and DNA protection. This chain is Nucleoid-associated protein Cagg_3200, found in Chloroflexus aggregans (strain MD-66 / DSM 9485).